The sequence spans 197 residues: Peptidyl-tRNA hydrolase (197 aa).

TRNA is bound at residue Tyr-18. The active-site Proton acceptor is the His-23. Phe-69, Asn-71, and Asn-117 together coordinate tRNA.

This sequence belongs to the PTH family. In terms of assembly, monomer.

The protein resides in the cytoplasm. It carries out the reaction an N-acyl-L-alpha-aminoacyl-tRNA + H2O = an N-acyl-L-amino acid + a tRNA + H(+). In terms of biological role, hydrolyzes ribosome-free peptidyl-tRNAs (with 1 or more amino acids incorporated), which drop off the ribosome during protein synthesis, or as a result of ribosome stalling. Functionally, catalyzes the release of premature peptidyl moieties from peptidyl-tRNA molecules trapped in stalled 50S ribosomal subunits, and thus maintains levels of free tRNAs and 50S ribosomes. In Tolumonas auensis (strain DSM 9187 / NBRC 110442 / TA 4), this protein is Peptidyl-tRNA hydrolase.